A 410-amino-acid chain; its full sequence is Gamma-glutamyl phosphate reductase (410 aa).

Belongs to the gamma-glutamyl phosphate reductase family.

It localises to the cytoplasm. The catalysed reaction is L-glutamate 5-semialdehyde + phosphate + NADP(+) = L-glutamyl 5-phosphate + NADPH + H(+). It participates in amino-acid biosynthesis; L-proline biosynthesis; L-glutamate 5-semialdehyde from L-glutamate: step 2/2. Functionally, catalyzes the NADPH-dependent reduction of L-glutamate 5-phosphate into L-glutamate 5-semialdehyde and phosphate. The product spontaneously undergoes cyclization to form 1-pyrroline-5-carboxylate. The protein is Gamma-glutamyl phosphate reductase of Sulfurimonas denitrificans (strain ATCC 33889 / DSM 1251) (Thiomicrospira denitrificans (strain ATCC 33889 / DSM 1251)).